The sequence spans 203 residues: Thymidine kinase (203 aa).

Residues 21 to 28 and 99 to 102 each bind ATP; these read GCMFAGKT and DEIQ. Catalysis depends on Glu-100, which acts as the Proton acceptor. Cys-156, Cys-159, Cys-194, and Cys-197 together coordinate Zn(2+).

This sequence belongs to the thymidine kinase family. As to quaternary structure, homotetramer.

The protein localises to the cytoplasm. It carries out the reaction thymidine + ATP = dTMP + ADP + H(+). This is Thymidine kinase from Mesoplasma florum (strain ATCC 33453 / NBRC 100688 / NCTC 11704 / L1) (Acholeplasma florum).